Consider the following 345-residue polypeptide: S-adenosylmethionine:tRNA ribosyltransferase-isomerase (345 aa).

The protein belongs to the QueA family. In terms of assembly, monomer.

The protein resides in the cytoplasm. It catalyses the reaction 7-aminomethyl-7-carbaguanosine(34) in tRNA + S-adenosyl-L-methionine = epoxyqueuosine(34) in tRNA + adenine + L-methionine + 2 H(+). The protein operates within tRNA modification; tRNA-queuosine biosynthesis. In terms of biological role, transfers and isomerizes the ribose moiety from AdoMet to the 7-aminomethyl group of 7-deazaguanine (preQ1-tRNA) to give epoxyqueuosine (oQ-tRNA). The polypeptide is S-adenosylmethionine:tRNA ribosyltransferase-isomerase (Lactococcus lactis subsp. lactis (strain IL1403) (Streptococcus lactis)).